Consider the following 234-residue polypeptide: 1-(5-phosphoribosyl)-5-[(5-phosphoribosylamino)methylideneamino] imidazole-4-carboxamide isomerase (234 aa).

Asp9 (proton acceptor) is an active-site residue. The Proton donor role is filled by Asp131.

It belongs to the HisA/HisF family.

The protein resides in the cytoplasm. It carries out the reaction 1-(5-phospho-beta-D-ribosyl)-5-[(5-phospho-beta-D-ribosylamino)methylideneamino]imidazole-4-carboxamide = 5-[(5-phospho-1-deoxy-D-ribulos-1-ylimino)methylamino]-1-(5-phospho-beta-D-ribosyl)imidazole-4-carboxamide. It functions in the pathway amino-acid biosynthesis; L-histidine biosynthesis; L-histidine from 5-phospho-alpha-D-ribose 1-diphosphate: step 4/9. The chain is 1-(5-phosphoribosyl)-5-[(5-phosphoribosylamino)methylideneamino] imidazole-4-carboxamide isomerase from Staphylococcus aureus (strain JH1).